A 798-amino-acid polypeptide reads, in one-letter code: Copalyl diphosphate synthase 1, chloroplastic (798 aa).

The transit peptide at 1 to 72 (MASLSTMHLI…SKVAGINRVA (72 aa)) directs the protein to the chloroplast. Lysine 251 is a substrate binding site. Residues aspartate 383 and aspartate 385 each contribute to the Mg(2+) site. The short motif at 383 to 386 (DIDD) is the DXDD motif element. A substrate-binding site is contributed by lysine 469.

Belongs to the terpene synthase family. Tpsc subfamily. Mg(2+) is required as a cofactor. As to expression, highly expressed in roots, and, at low levels, in stems and leaves.

The protein localises to the plastid. It is found in the chloroplast. The enzyme catalyses (2E,6E,10E)-geranylgeranyl diphosphate = (+)-copalyl diphosphate. The protein operates within secondary metabolite biosynthesis; terpenoid biosynthesis. Functionally, involved in the biosynthesis of ent-kaurene diterpenoids natural products such as oridonin, miltiradiene, eriocalyxin B and nezukol, known to exhibit antitumor, anti-inflammatory and antibacterial activities. Catalyzes the conversion of (2E,6E,10E)-geranylgeranyl diphosphate (GGPP) to (+)-copalyl diphosphate ((+)-CPP). The chain is Copalyl diphosphate synthase 1, chloroplastic from Isodon rubescens (Rabdosia rubescens).